The sequence spans 443 residues: Probable glycine dehydrogenase (decarboxylating) subunit 1 (443 aa).

The protein belongs to the GcvP family. N-terminal subunit subfamily. The glycine cleavage system is composed of four proteins: P, T, L and H. In this organism, the P 'protein' is a heterodimer of two subunits.

The catalysed reaction is N(6)-[(R)-lipoyl]-L-lysyl-[glycine-cleavage complex H protein] + glycine + H(+) = N(6)-[(R)-S(8)-aminomethyldihydrolipoyl]-L-lysyl-[glycine-cleavage complex H protein] + CO2. Functionally, the glycine cleavage system catalyzes the degradation of glycine. The P protein binds the alpha-amino group of glycine through its pyridoxal phosphate cofactor; CO(2) is released and the remaining methylamine moiety is then transferred to the lipoamide cofactor of the H protein. This Desulfovibrio desulfuricans (strain ATCC 27774 / DSM 6949 / MB) protein is Probable glycine dehydrogenase (decarboxylating) subunit 1.